The primary structure comprises 500 residues: ATP synthase subunit alpha, sodium ion specific (500 aa).

169–176 (GDRQTGKT) contacts ATP.

It belongs to the ATPase alpha/beta chains family. As to quaternary structure, F-type ATPases have 2 components, CF(1) - the catalytic core - and CF(0) - the membrane proton channel. CF(1) has five subunits: alpha(3), beta(3), gamma(1), delta(1), epsilon(1). CF(0) has three main subunits: a, b and c.

It localises to the cell membrane. It catalyses the reaction 4 Na(+)(in) + ATP + H2O = 4 Na(+)(out) + ADP + phosphate + H(+). Produces ATP from ADP in the presence of a sodium ion gradient across the membrane. The alpha chain is a regulatory subunit. The chain is ATP synthase subunit alpha, sodium ion specific from Propionigenium modestum.